The following is a 262-amino-acid chain: Polyamine aminopropyltransferase (262 aa).

The region spanning 1–249 (MWITQEITPY…DIHRAAFALP (249 aa)) is the PABS domain. Asn-29 contacts S-methyl-5'-thioadenosine. Residue Asp-83 coordinates spermidine. Asp-155 (proton acceptor) is an active-site residue.

In terms of assembly, homodimer.

Its subcellular location is the cytoplasm. The enzyme catalyses S-adenosyl 3-(methylsulfanyl)propylamine + putrescine = S-methyl-5'-thioadenosine + spermidine + H(+). Its pathway is amine and polyamine biosynthesis; spermidine biosynthesis; spermidine from putrescine: step 1/1. Inhibited by methylglyoxal bis(cyclopentylamidinohydrazone)(MGBCP). Involved in the cell growth and proliferation. Catalyzes the irreversible transfer of a propylamine group from the amino donor S-adenosylmethioninamine (decarboxy-AdoMet) to putrescine (1,4-diaminobutane) to yield spermidine. Spermidine cannot be used as an aminopropyl acceptor. The sequence is that of Polyamine aminopropyltransferase from Helicobacter pylori (strain ATCC 700392 / 26695) (Campylobacter pylori).